The sequence spans 56 residues: Small ribosomal subunit protein uS14 (56 aa).

Zn(2+)-binding residues include Cys21, Cys24, Cys39, and Cys42.

Belongs to the universal ribosomal protein uS14 family. Zn(2+) serves as cofactor.

This is Small ribosomal subunit protein uS14 (RPS29) from Griffithsia japonica (Red alga).